Reading from the N-terminus, the 328-residue chain is Nuclear transcription factor Y subunit A-8 (328 aa).

The tract at residues 54–86 (KNISFQDQDSSSTLSSAQSSNDVTSSGDDNPSR) is disordered. A compositionally biased stretch (low complexity) spans 57–75 (SFQDQDSSSTLSSAQSSND). Over residues 76-86 (VTSSGDDNPSR) the composition is skewed to polar residues. Positions 175-198 (FVNAKQFHAIMRRRQQRAKLEAQN) match the Subunit association domain (SAD) motif. The segment at residues 205 to 230 (KPYLHESRHVHALKRPRGSGGRFLNT) is a DNA-binding region (NFYA/HAP2-type).

The protein belongs to the NFYA/HAP2 subunit family. As to quaternary structure, heterotrimeric transcription factor composed of three components, NF-YA, NF-YB and NF-YC. NF-YB and NF-YC must interact and dimerize for NF-YA association and DNA binding. Expressed in the whole plant, except roots.

The protein resides in the nucleus. Functionally, stimulates the transcription of various genes by recognizing and binding to a CCAAT motif in promoters. The protein is Nuclear transcription factor Y subunit A-8 (NFYA8) of Arabidopsis thaliana (Mouse-ear cress).